A 594-amino-acid polypeptide reads, in one-letter code: Zinc finger protein 467 (594 aa).

The segment at 1–86 (MRETLEALNS…PQKAEPAGSV (86 aa)) is disordered. The segment at 1-183 (MRETLEALNS…TLRLHQRLHR (183 aa)) is interaction with STAT3. The segment covering 31 to 47 (SNAQEKMSSRGESTLHS) has biased composition (polar residues). Residues 54-64 (PGQKEGIHTEQ) are compositionally biased toward basic and acidic residues. Residue K97 forms a Glycyl lysine isopeptide (Lys-Gly) (interchain with G-Cter in SUMO2) linkage. C2H2-type zinc fingers lie at residues 160–182 (YGCEECERRFRDQLTLRLHQRLH), 188–210 (CACPDCGRSFTQRAHMLLHQRSH), 216–238 (FPCSECDKRFSKKAHLTRHLRTH), 244–266 (YPCAECGKRFSQKIHLGSHQKTH), 272–294 (FPCTECEKRFRKKTHLIRHQRIH), 300–322 (YQCTQCTRSFTHKQHLVRHQRVH), 355–377 (FACSHCGQSFGWKKNLATHQSLH), 430–452 (FFCPDCGRGFAHGQHLARHRRVH), 458–480 (FACAQCGRRFGSRPNLVAHSRAH), 486–508 (FACAQCGRRFSRKSHLGRHQAVH), 514–536 (HACAVCARCFSSKTNLVRHQAIH), and 542–564 (FSCPQCAKSFSRKTHLVRHQRIH). The disordered stretch occupies residues 313–351 (QHLVRHQRVHDAASRTRSSPDIPVAPHSPTASLTPSPPG). Residue K368 forms a Glycyl lysine isopeptide (Lys-Gly) (interchain with G-Cter in SUMO2) linkage.

This sequence belongs to the krueppel C2H2-type zinc-finger protein family. Interacts with STAT3. Enhances STAT3 activity by keeping it in the nucleus.

It is found in the nucleus. Functionally, transcription factor that promotes adipocyte differentiation and suppresses osteoblast differentiation in the bone marrow. Enhances the osteoclast-supporting ability of stromal cells. Binds with STAT3 the consensus sequence 5'-CTTCTGGGAAGA-3' of the acute phase response element (APRE). Transactivates several promoters including FOS, OSM and PPARG. Recruits a histone deacetylase complex. This chain is Zinc finger protein 467 (Znf467), found in Mus musculus (Mouse).